Here is a 553-residue protein sequence, read N- to C-terminus: Dihydroxy-acid dehydratase (553 aa).

Residue Asp-78 participates in Mg(2+) binding. Cys-119 contacts [2Fe-2S] cluster. Asp-120 and Lys-121 together coordinate Mg(2+). Lys-121 bears the N6-carboxylysine mark. A [2Fe-2S] cluster-binding site is contributed by Cys-193. Glu-441 contacts Mg(2+). Ser-467 serves as the catalytic Proton acceptor.

This sequence belongs to the IlvD/Edd family. Homodimer. [2Fe-2S] cluster is required as a cofactor. It depends on Mg(2+) as a cofactor.

It catalyses the reaction (2R)-2,3-dihydroxy-3-methylbutanoate = 3-methyl-2-oxobutanoate + H2O. The enzyme catalyses (2R,3R)-2,3-dihydroxy-3-methylpentanoate = (S)-3-methyl-2-oxopentanoate + H2O. Its pathway is amino-acid biosynthesis; L-isoleucine biosynthesis; L-isoleucine from 2-oxobutanoate: step 3/4. The protein operates within amino-acid biosynthesis; L-valine biosynthesis; L-valine from pyruvate: step 3/4. Its function is as follows. Functions in the biosynthesis of branched-chain amino acids. Catalyzes the dehydration of (2R,3R)-2,3-dihydroxy-3-methylpentanoate (2,3-dihydroxy-3-methylvalerate) into 2-oxo-3-methylpentanoate (2-oxo-3-methylvalerate) and of (2R)-2,3-dihydroxy-3-methylbutanoate (2,3-dihydroxyisovalerate) into 2-oxo-3-methylbutanoate (2-oxoisovalerate), the penultimate precursor to L-isoleucine and L-valine, respectively. This is Dihydroxy-acid dehydratase from Geobacter sp. (strain M21).